Reading from the N-terminus, the 446-residue chain is Tubulin beta chain (446 aa).

Residues Gln11, Glu69, Ser138, Gly142, Thr143, Gly144, Asn204, and Asn226 each contribute to the GTP site. Mg(2+) is bound at residue Glu69. Residues 423-446 (QQYQDAGVDEEEEEYEEEPLPEDE) are disordered. Acidic residues predominate over residues 429-446 (GVDEEEEEYEEEPLPEDE).

It belongs to the tubulin family. In terms of assembly, dimer of alpha and beta chains. A typical microtubule is a hollow water-filled tube with an outer diameter of 25 nm and an inner diameter of 15 nM. Alpha-beta heterodimers associate head-to-tail to form protofilaments running lengthwise along the microtubule wall with the beta-tubulin subunit facing the microtubule plus end conferring a structural polarity. Microtubules usually have 13 protofilaments but different protofilament numbers can be found in some organisms and specialized cells. Mg(2+) serves as cofactor.

It localises to the cytoplasm. The protein resides in the cytoskeleton. In terms of biological role, tubulin is the major constituent of microtubules, a cylinder consisting of laterally associated linear protofilaments composed of alpha- and beta-tubulin heterodimers. Microtubules grow by the addition of GTP-tubulin dimers to the microtubule end, where a stabilizing cap forms. Below the cap, tubulin dimers are in GDP-bound state, owing to GTPase activity of alpha-tubulin. This is Tubulin beta chain (TUBB) from Pestalotiopsis microspora.